A 516-amino-acid polypeptide reads, in one-letter code: Potassium voltage-gated channel subfamily A member 10 (516 aa).

A helical membrane pass occupies residues 223-244 (VALVSVLVIVISIIIFCMETLP). A glycan (N-linked (GlcNAc...) asparagine) is linked at Asn-261. The helical transmembrane segment at 276–296 (FFVIETACIIWFSFELFVRFI) threads the bilayer. Residues 308–328 (IMNIIDIVSIIPYFVTLTTEL) form a helical membrane-spanning segment. Asn-339 carries an N-linked (GlcNAc...) asparagine glycan. Residues 344-363 (ILRIIRLVRVFRIFKLSRHS) form a helical; Voltage-sensor membrane-spanning segment. The helical transmembrane segment at 380-400 (LGLLIFFLFIGVILFSSAVYF) threads the bilayer. A Selectivity filter motif is present at residues 426–431 (TVGYGD). Residues 441–461 (IVGTLCAIAGVLTIALPVPVI) form a helical membrane-spanning segment. The N-linked (GlcNAc...) asparagine glycan is linked to Asn-503.

The protein belongs to the potassium channel family. A (Shaker) (TC 1.A.1.2) subfamily. Kv1.8/KCNA10 sub-subfamily. Homotetramer. Detected in brain, cochlear sensory epithelium, cochlear ganglion, tegumentum vasculosum. Detected at low levels in cochlear lagena.

The protein localises to the membrane. The catalysed reaction is K(+)(in) = K(+)(out). Its activity is regulated as follows. The channel activity is up-regulated by cAMP. Functionally, voltage-gated potassium ion channel that mediates K(+) permeability of excitable membranes. When opened in response to the voltage difference across the membrane, KCNA10 channel selectively allows the flow of potassium ions across the membrane down their electrochemical gradient. The polypeptide is Potassium voltage-gated channel subfamily A member 10 (KCNA10) (Gallus gallus (Chicken)).